Here is a 118-residue protein sequence, read N- to C-terminus: MGIKYSNKINKIRTFALSLVFIGLFIAYLGVFFRENIIIMTTFMMVGFLAVIASTVVYFWIGMLSTKTIQIICPSCDKPTKMLGRVDACMHCNQPLTLDRNLEGKEFDEKYNKKSYKS.

The next 2 membrane-spanning stretches (helical) occupy residues 12 to 32 (IRTFALSLVFIGLFIAYLGVF) and 43 to 63 (FMMVGFLAVIASTVVYFWIGM).

This sequence belongs to the UPF0295 family.

It is found in the cell membrane. This is UPF0295 protein BcerKBAB4_0454 from Bacillus mycoides (strain KBAB4) (Bacillus weihenstephanensis).